The following is a 356-amino-acid chain: Glutenin, low molecular weight subunit (356 aa).

A signal peptide spans 1-19 (MKTFLVFALLALAAASAVA). Residues 20–179 (QISQQQQAPP…LQQQRPPFSR (160 aa)) form a disordered region.

This sequence belongs to the gliadin/glutenin family. As to quaternary structure, disulfide-bridge linked aggregates.

Functionally, glutenins are high-molecular weight seed storage proteins of wheat endosperm. Thought to be responsible for the visco-elastic property of wheat dough. This is Glutenin, low molecular weight subunit from Triticum aestivum (Wheat).